Here is a 270-residue protein sequence, read N- to C-terminus: Phospholysine phosphohistidine inorganic pyrophosphate phosphatase (270 aa).

D17 and S19 together coordinate Mg(2+). Substrate-binding positions include 17-19 (DIS), 54-55 (TN), and K189. D214 contacts Mg(2+).

It belongs to the HAD-like hydrolase superfamily. As to quaternary structure, homodimer. Mg(2+) is required as a cofactor. Expressed in brain, and at lower levels in liver and kidney. Detected in thyroid (at protein level). Expressed in liver, kidney and moderately in brain.

The protein resides in the cytoplasm. Its subcellular location is the nucleus. It catalyses the reaction diphosphate + H2O = 2 phosphate + H(+). Functionally, phosphatase that hydrolyzes imidodiphosphate, 3-phosphohistidine and 6-phospholysine. Has broad substrate specificity and can also hydrolyze inorganic diphosphate, but with lower efficiency. This is Phospholysine phosphohistidine inorganic pyrophosphate phosphatase (LHPP) from Homo sapiens (Human).